Consider the following 145-residue polypeptide: Peptide methionine sulfoxide reductase MsrB (145 aa).

The region spanning 4–127 is the MsrB domain; that stretch reads SDELKQRIGD…NSAALKFIPY (124 aa). Cys-116 serves as the catalytic Nucleophile.

The protein belongs to the MsrB Met sulfoxide reductase family.

The catalysed reaction is L-methionyl-[protein] + [thioredoxin]-disulfide + H2O = L-methionyl-(R)-S-oxide-[protein] + [thioredoxin]-dithiol. This is Peptide methionine sulfoxide reductase MsrB from Streptococcus pyogenes serotype M1.